Reading from the N-terminus, the 267-residue chain is Acryloyl-CoA reductase electron transfer subunit gamma (267 aa).

Heterohexadecamer; tetramer of tetramers. Each tetramer is composed of 2 alpha (AcrC), a beta (AcrA) and a gamma (AcrB) subunit.

It localises to the cytoplasm. Functionally, part of the ETF-acryloyl-CoA reductase complex involved in the pathway of L-alanine fermentation. The electron transfer flavoprotein (ETF) serves as a specific electron acceptor for acryloyl-CoA reductase. The polypeptide is Acryloyl-CoA reductase electron transfer subunit gamma (acrB) (Anaerotignum propionicum (Clostridium propionicum)).